The following is a 157-amino-acid chain: Crossover junction endodeoxyribonuclease RuvC (157 aa).

Residues Asp-7, Glu-67, and Asp-140 contribute to the active site. The Mg(2+) site is built by Asp-7, Glu-67, and Asp-140.

The protein belongs to the RuvC family. Homodimer which binds Holliday junction (HJ) DNA. The HJ becomes 2-fold symmetrical on binding to RuvC with unstacked arms; it has a different conformation from HJ DNA in complex with RuvA. In the full resolvosome a probable DNA-RuvA(4)-RuvB(12)-RuvC(2) complex forms which resolves the HJ. Mg(2+) is required as a cofactor.

It is found in the cytoplasm. The enzyme catalyses Endonucleolytic cleavage at a junction such as a reciprocal single-stranded crossover between two homologous DNA duplexes (Holliday junction).. In terms of biological role, the RuvA-RuvB-RuvC complex processes Holliday junction (HJ) DNA during genetic recombination and DNA repair. Endonuclease that resolves HJ intermediates. Cleaves cruciform DNA by making single-stranded nicks across the HJ at symmetrical positions within the homologous arms, yielding a 5'-phosphate and a 3'-hydroxyl group; requires a central core of homology in the junction. The consensus cleavage sequence is 5'-(A/T)TT(C/G)-3'. Cleavage occurs on the 3'-side of the TT dinucleotide at the point of strand exchange. HJ branch migration catalyzed by RuvA-RuvB allows RuvC to scan DNA until it finds its consensus sequence, where it cleaves and resolves the cruciform DNA. The chain is Crossover junction endodeoxyribonuclease RuvC from Rickettsia bellii (strain RML369-C).